Consider the following 519-residue polypeptide: Ribonuclease Y (519 aa).

A helical transmembrane segment spans residues 3 to 23 (LMIFAYIAIGAVLGAGTGYLL). The KH domain occupies 209–272 (TVTAVTLPSE…QVAKMALERL (64 aa)). Residues 335 to 428 (VLQHSLEVSA…VQAADSISGA (94 aa)) form the HD domain.

The protein belongs to the RNase Y family.

It is found in the cell membrane. Endoribonuclease that initiates mRNA decay. This is Ribonuclease Y from Nitratidesulfovibrio vulgaris (strain ATCC 29579 / DSM 644 / CCUG 34227 / NCIMB 8303 / VKM B-1760 / Hildenborough) (Desulfovibrio vulgaris).